Consider the following 87-residue polypeptide: MVNMKASMFLTFAGLVLLLVVCYASESEEKEFPKEMLSSIFAVDNDFKQEERDCAGYMRECKEKLCCSGYVCSSRWKWCVLPAPWRR.

The signal sequence occupies residues 1–24; the sequence is MVNMKASMFLTFAGLVLLLVVCYA. The propeptide occupies 25 to 52; sequence SESEEKEFPKEMLSSIFAVDNDFKQEER. Disulfide bonds link Cys-54–Cys-67, Cys-61–Cys-72, and Cys-66–Cys-79.

The protein belongs to the neurotoxin 10 (Hwtx-1) family. 51 (Hntx-8) subfamily. Hntx-8 sub-subfamily. As to expression, expressed by the venom gland.

Its subcellular location is the secreted. In terms of biological role, ion channel inhibitor. In Cyriopagopus hainanus (Chinese bird spider), this protein is U3-theraphotoxin-Hhn1a 15.